The sequence spans 348 residues: Probable tRNA pseudouridine synthase B (348 aa).

The active-site Nucleophile is Asp-93. Residues Leu-260 to Met-335 form the PUA domain.

This sequence belongs to the pseudouridine synthase TruB family. Type 2 subfamily.

It carries out the reaction uridine(55) in tRNA = pseudouridine(55) in tRNA. Functionally, could be responsible for synthesis of pseudouridine from uracil-55 in the psi GC loop of transfer RNAs. The chain is Probable tRNA pseudouridine synthase B from Nanoarchaeum equitans (strain Kin4-M).